The following is a 179-amino-acid chain: Large ribosomal subunit protein uL6 (179 aa).

The protein belongs to the universal ribosomal protein uL6 family. In terms of assembly, part of the 50S ribosomal subunit.

In terms of biological role, this protein binds to the 23S rRNA, and is important in its secondary structure. It is located near the subunit interface in the base of the L7/L12 stalk, and near the tRNA binding site of the peptidyltransferase center. This chain is Large ribosomal subunit protein uL6, found in Chlorobium chlorochromatii (strain CaD3).